A 152-amino-acid polypeptide reads, in one-letter code: MADVEPEVAAAGVPKKRTFKKFAFKGVDLDALLDMSTDDLVKLFSSRIRRRFSRGLTRKPMALIKKLRKAKREAPAGEKPEPVRTHLRNMIIVPEMIGSIIGVYNGKTFNQVEIKPEMIGHYLAEFSISYKPVKHGRPGVGATHSSRFIPLK.

Belongs to the universal ribosomal protein uS19 family.

It is found in the cytoplasm. The sequence is that of Small ribosomal subunit protein uS19x (RPS15D) from Arabidopsis thaliana (Mouse-ear cress).